The sequence spans 512 residues: Retinaldehyde dehydrogenase 3 (512 aa).

A disordered region spans residues 1 to 22; sequence MATTNGAVENGQPDGKPPALPR. A2 bears the N-acetylalanine mark. NAD(+) contacts are provided by residues K204, E207, and 257–262; that span reads GSTEVG. The active-site Proton acceptor is the E280. Catalysis depends on C314, which acts as the Nucleophile. 2 residues coordinate NAD(+): Q361 and E411.

The protein belongs to the aldehyde dehydrogenase family. Homotetramer. Detected in embryonic head (at protein level). Ventral retina.

Its subcellular location is the cytoplasm. The enzyme catalyses retinal + NAD(+) + H2O = retinoate + NADH + 2 H(+). It carries out the reaction all-trans-retinal + NAD(+) + H2O = all-trans-retinoate + NADH + 2 H(+). It catalyses the reaction all-trans-13,14-dihydroretinal + NAD(+) + H2O = all-trans-13,14-dihydroretinoate + NADH + 2 H(+). It functions in the pathway cofactor metabolism; retinol metabolism. In terms of biological role, catalyzes the NAD-dependent oxidation of aldehyde substrates, such as all-trans-retinal and all-trans-13,14-dihydroretinal, to their corresponding carboxylic acids, all-trans-retinoate and all-trans-13,14-dihydroretinoate, respectively. High specificity for all-trans-retinal as substrate, can also accept acetaldehyde as substrate in vitro but with lower affinity. Required for the biosynthesis of normal levels of retinoate in the embryonic ocular and nasal regions; a critical lipid in the embryonic development of the eye and the nasal region. This is Retinaldehyde dehydrogenase 3 (Aldh1a3) from Mus musculus (Mouse).